We begin with the raw amino-acid sequence, 457 residues long: tRNA-2-methylthio-N(6)-dimethylallyladenosine synthase (457 aa).

The 116-residue stretch at 18 to 133 (KKLFIETYGC…LPELIASVEA (116 aa)) folds into the MTTase N-terminal domain. Residues Cys-27, Cys-63, Cys-97, Cys-171, Cys-175, and Cys-178 each coordinate [4Fe-4S] cluster. Positions 157–390 (CGNHISGFVS…IALQNRLSAE (234 aa)) constitute a Radical SAM core domain. In terms of domain architecture, TRAM spans 393 to 456 (NRCIGKTYEV…SATLKGEEVF (64 aa)).

This sequence belongs to the methylthiotransferase family. MiaB subfamily. In terms of assembly, monomer. [4Fe-4S] cluster is required as a cofactor.

The protein localises to the cytoplasm. It catalyses the reaction N(6)-dimethylallyladenosine(37) in tRNA + (sulfur carrier)-SH + AH2 + 2 S-adenosyl-L-methionine = 2-methylsulfanyl-N(6)-dimethylallyladenosine(37) in tRNA + (sulfur carrier)-H + 5'-deoxyadenosine + L-methionine + A + S-adenosyl-L-homocysteine + 2 H(+). Functionally, catalyzes the methylthiolation of N6-(dimethylallyl)adenosine (i(6)A), leading to the formation of 2-methylthio-N6-(dimethylallyl)adenosine (ms(2)i(6)A) at position 37 in tRNAs that read codons beginning with uridine. The polypeptide is tRNA-2-methylthio-N(6)-dimethylallyladenosine synthase (Bacteroides fragilis (strain ATCC 25285 / DSM 2151 / CCUG 4856 / JCM 11019 / LMG 10263 / NCTC 9343 / Onslow / VPI 2553 / EN-2)).